Here is a 288-residue protein sequence, read N- to C-terminus: Structure-specific endonuclease subunit SLX1 (288 aa).

The GIY-YIG domain occupies 7–90 (PFYGVYLLQS…QHPNMTRLIT (84 aa)).

This sequence belongs to the SLX1 family. In terms of assembly, forms a heterodimer with SLX4. It depends on a divalent metal cation as a cofactor.

It is found in the nucleus. Its function is as follows. Catalytic subunit of the SLX1-SLX4 structure-specific endonuclease that resolves DNA secondary structures generated during DNA repair and recombination. Has endonuclease activity towards branched DNA substrates, introducing single-strand cuts in duplex DNA close to junctions with ss-DNA. This chain is Structure-specific endonuclease subunit SLX1, found in Yarrowia lipolytica (strain CLIB 122 / E 150) (Yeast).